The sequence spans 546 residues: Chaperonin GroEL 2 (546 aa).

ATP is bound by residues 30–33, Lys-51, 87–91, Gly-415, 479–481, and Asp-495; these read TLGP, DGTTT, and NAA. The interval 524–546 is disordered; sequence APKDAPPAQPAGVPGAGGTGFDF. Residues 537-546 are compositionally biased toward gly residues; it reads PGAGGTGFDF.

Belongs to the chaperonin (HSP60) family. In terms of assembly, forms a cylinder of 14 subunits composed of two heptameric rings stacked back-to-back. Interacts with the co-chaperonin GroES.

The protein localises to the cytoplasm. The catalysed reaction is ATP + H2O + a folded polypeptide = ADP + phosphate + an unfolded polypeptide.. Together with its co-chaperonin GroES, plays an essential role in assisting protein folding. The GroEL-GroES system forms a nano-cage that allows encapsulation of the non-native substrate proteins and provides a physical environment optimized to promote and accelerate protein folding. This Burkholderia thailandensis (strain ATCC 700388 / DSM 13276 / CCUG 48851 / CIP 106301 / E264) protein is Chaperonin GroEL 2.